We begin with the raw amino-acid sequence, 205 residues long: Glycerol-3-phosphate acyltransferase (205 aa).

The Periplasmic portion of the chain corresponds to 1–3 (MSA). A helical transmembrane segment spans residues 4–24 (IAPGMILFAYLCGSISSAILV). The Cytoplasmic segment spans residues 25-52 (CRIAGLPDPRESGSGNPGATNVLRIGGK). The chain crosses the membrane as a helical span at residues 53-73 (GAAVAVLIFDILKGMLPVWGA). Topologically, residues 74–80 (YALGVTP) are periplasmic. A helical transmembrane segment spans residues 81 to 101 (FWLGLIAIAACLGHIWPVFFG). Topologically, residues 102-111 (FKGGKGVATA) are cytoplasmic. The chain crosses the membrane as a helical span at residues 112 to 132 (FGAIAPIGWDLTGVMAGTWLL). The Periplasmic portion of the chain corresponds to 133–137 (TVLLS). Residues 138-158 (GYSSLGAIVSALIAPFYVWWF) traverse the membrane as a helical segment. Residues 159–205 (KPQFTFPVSMLSCLILLRHHDNIQRLWRRQETKIWTKLKKKRQKDSE) lie on the Cytoplasmic side of the membrane.

Belongs to the PlsY family. Probably interacts with PlsX.

It is found in the cell inner membrane. It carries out the reaction sn-glycerol 3-phosphate + an acyl-CoA = a 1-acyl-sn-glycero-3-phosphate + CoA. It catalyses the reaction a fatty acyl-[ACP] + sn-glycerol 3-phosphate = a 1-acyl-sn-glycero-3-phosphate + holo-[ACP]. It participates in lipid metabolism; phospholipid metabolism. In terms of biological role, catalyzes the transfer of an acyl group from acyl-ACP to glycerol-3-phosphate (G3P) to form lysophosphatidic acid (LPA). This enzyme can also utilize acyl-CoA as fatty acyl donor, but not acyl-PO(4). The sequence is that of Glycerol-3-phosphate acyltransferase from Salmonella schwarzengrund (strain CVM19633).